The sequence spans 558 residues: MPLPFEEFQGKGISCFSSFSSSFPQPPSSPLLSHRKARGGEEEEEEVPAAEPTSVLDSLISPTSSSTVSSSHGGNSAVGGGGDATTDEQCGAIGLGDWEEQVPHDHEQSILGLIMGDSTDPSLELNSILQTSPTFHDSDYSSPGFGVVDTGFGLDHHSVPPSHVSGLLINQSQTHYTQNPAAIFYGHHHHTPPPAKRLNPGPVGITEQLVKAAEVIESDTCLAQGILARLNQQLSSPVGKPLERAAFYFKEALNNLLHNVSQTLNPYSLIFKIAAYKSFSEISPVLQFANFTSNQALLESFHGFHRLHIIDFDIGYGGQWASLMQELVLRDNAAPLSLKITVFASPANHDQLELGFTQDNLKHFASEINISLDIQVLSLDLLGSISWPNSSEKEAVAVNISAASFSHLPLVLRFVKHLSPTIIVCSDRGCERTDLPFSQQLAHSLHSHTALFESLDAVNANLDAMQKIERFLIQPEIEKLVLDRSRPIERPMMTWQAMFLQMGFSPVTHSNFTESQAECLVQRTPVRGFHVEKKHNSLLLCWQRTELVGVSAWRCRSS.

The tract at residues 19 to 90 (FSSSFPQPPS…GGDATTDEQC (72 aa)) is disordered. Over residues 54–75 (SVLDSLISPTSSSTVSSSHGGN) the composition is skewed to low complexity. The GRAS domain occupies 196–554 (KRLNPGPVGI…TELVGVSAWR (359 aa)). The interval 203 to 257 (VGITEQLVKAAEVIESDTCLAQGILARLNQQLSSPVGKPLERAAFYFKEALNNLL) is leucine repeat I (LRI). Residues 276–340 (YKSFSEISPV…DNAAPLSLKI (65 aa)) form a VHIID region. Residues 307–311 (LHIID) carry the VHIID motif. The tract at residues 356–388 (FTQDNLKHFASEINISLDIQVLSLDLLGSISWP) is leucine repeat II (LRII). The PFYRE stretch occupies residues 396-479 (VAVNISAASF…RFLIQPEIEK (84 aa)). Positions 482–554 (LDRSRPIERP…TELVGVSAWR (73 aa)) are SAW.

Belongs to the GRAS family. As to quaternary structure, interacts with Meloidogyne incognita 16D10. Expressed in seedlings, roots, leaves, flowers and siliques.

It is found in the nucleus. Probable transcription factor involved in plant development. The chain is Scarecrow-like protein 6 (SCL6) from Arabidopsis thaliana (Mouse-ear cress).